The sequence spans 282 residues: 4-hydroxy-3-methylbut-2-enyl diphosphate reductase (282 aa).

Residue cysteine 12 coordinates [4Fe-4S] cluster. Residues histidine 40 and histidine 72 each coordinate (2E)-4-hydroxy-3-methylbut-2-enyl diphosphate. Residues histidine 40 and histidine 72 each contribute to the dimethylallyl diphosphate site. Isopentenyl diphosphate contacts are provided by histidine 40 and histidine 72. [4Fe-4S] cluster is bound at residue cysteine 94. Position 122 (histidine 122) interacts with (2E)-4-hydroxy-3-methylbut-2-enyl diphosphate. Histidine 122 serves as a coordination point for dimethylallyl diphosphate. Histidine 122 contacts isopentenyl diphosphate. Catalysis depends on glutamate 124, which acts as the Proton donor. Threonine 160 is a binding site for (2E)-4-hydroxy-3-methylbut-2-enyl diphosphate. Cysteine 188 contacts [4Fe-4S] cluster. 3 residues coordinate (2E)-4-hydroxy-3-methylbut-2-enyl diphosphate: serine 216, asparagine 218, and serine 260. The dimethylallyl diphosphate site is built by serine 216, asparagine 218, and serine 260. 3 residues coordinate isopentenyl diphosphate: serine 216, asparagine 218, and serine 260.

This sequence belongs to the IspH family. [4Fe-4S] cluster serves as cofactor.

It carries out the reaction isopentenyl diphosphate + 2 oxidized [2Fe-2S]-[ferredoxin] + H2O = (2E)-4-hydroxy-3-methylbut-2-enyl diphosphate + 2 reduced [2Fe-2S]-[ferredoxin] + 2 H(+). The catalysed reaction is dimethylallyl diphosphate + 2 oxidized [2Fe-2S]-[ferredoxin] + H2O = (2E)-4-hydroxy-3-methylbut-2-enyl diphosphate + 2 reduced [2Fe-2S]-[ferredoxin] + 2 H(+). Its pathway is isoprenoid biosynthesis; dimethylallyl diphosphate biosynthesis; dimethylallyl diphosphate from (2E)-4-hydroxy-3-methylbutenyl diphosphate: step 1/1. The protein operates within isoprenoid biosynthesis; isopentenyl diphosphate biosynthesis via DXP pathway; isopentenyl diphosphate from 1-deoxy-D-xylulose 5-phosphate: step 6/6. In terms of biological role, catalyzes the conversion of 1-hydroxy-2-methyl-2-(E)-butenyl 4-diphosphate (HMBPP) into a mixture of isopentenyl diphosphate (IPP) and dimethylallyl diphosphate (DMAPP). Acts in the terminal step of the DOXP/MEP pathway for isoprenoid precursor biosynthesis. This is 4-hydroxy-3-methylbut-2-enyl diphosphate reductase from Geotalea daltonii (strain DSM 22248 / JCM 15807 / FRC-32) (Geobacter daltonii).